The chain runs to 394 residues: Elongation factor Tu (394 aa).

In terms of domain architecture, tr-type G spans 10 to 204 (KPHINIGTIG…AVDDNIPTPE (195 aa)). Residues 19 to 26 (GHVDHGKT) form a G1 region. GTP is bound at residue 19 to 26 (GHVDHGKT). Thr-26 contributes to the Mg(2+) binding site. The tract at residues 60 to 64 (GITIN) is G2. The segment at 81–84 (DCPG) is G3. GTP contacts are provided by residues 81–85 (DCPGH) and 136–139 (NKID). Positions 136–139 (NKID) are G4. The segment at 174 to 176 (SAL) is G5.

The protein belongs to the TRAFAC class translation factor GTPase superfamily. Classic translation factor GTPase family. EF-Tu/EF-1A subfamily. In terms of assembly, monomer.

The protein resides in the cytoplasm. The enzyme catalyses GTP + H2O = GDP + phosphate + H(+). GTP hydrolase that promotes the GTP-dependent binding of aminoacyl-tRNA to the A-site of ribosomes during protein biosynthesis. The protein is Elongation factor Tu of Chlamydia abortus (strain DSM 27085 / S26/3) (Chlamydophila abortus).